A 506-amino-acid chain; its full sequence is Sodium-coupled neutral amino acid symporter 2 (506 aa).

Positions 1 to 23 (MKKAEMGRFNISPDEDSSSYSSN) are disordered. Topologically, residues 1–76 (MKKAEMGRFN…HPGTTSFGMS (76 aa)) are cytoplasmic. Residues 1-96 (MKKAEMGRFN…SGILGLSYAM (96 aa)) form a regulates protein turnover upon amino acid deprivation region. A phosphoserine mark is found at Ser12, Ser21, Ser22, and Ser55. Residues 77 to 96 (VFNLSNAIVGSGILGLSYAM) form a helical membrane-spanning segment. A Na(+)-binding site is contributed by Asn82. At 97-102 (ANTGIA) the chain is on the extracellular side. The helical transmembrane segment at 103 to 123 (LFIILLTFVSIFSLYSVHLLL) threads the bilayer. At 124–158 (KTANEGGSLLYEQLGYKAFGLVGKLAASGSITMQN) the chain is on the cytoplasmic side. The chain crosses the membrane as a helical span at residues 159–177 (IGAMSSYLFIVKYELPLVI). The Extracellular segment spans residues 178–188 (QALTNIEDKTG). The chain crosses the membrane as a helical span at residues 189 to 209 (LWYLNGNYLVLLVSLVVILPL). The Cytoplasmic segment spans residues 210–217 (SLFRNLGY). A helical membrane pass occupies residues 218–238 (LGYTSGLSLLCMVFFLIVVIC). The Extracellular segment spans residues 239–292 (KKFQVPCPVEAALIINETINTTLTQPTALVPALSHNVTENDSCRPHYFIFNSQT). Cysteines 245 and 281 form a disulfide. Residues Asn258 and Asn274 are each glycosylated (N-linked (GlcNAc...) asparagine). The helical transmembrane segment at 293–313 (VYAVPILIFSFVCHPAVLPIY) threads the bilayer. At 314-329 (EELKDRSRRRMMNVSK) the chain is on the cytoplasmic side. The chain crosses the membrane as a helical span at residues 330–350 (ISFFAMFLMYLLAALFGYLTF). Topologically, residues 351-371 (YEHVESELLHTYSSILGTDIL) are extracellular. Residues 372–392 (LLIVRLAVLMAVTLTVPVVIF) form a helical membrane-spanning segment. Thr386 is a binding site for Na(+). At 393–413 (PIRSSVTHLLCASKDFSWWRH) the chain is on the cytoplasmic side. A helical transmembrane segment spans residues 414–434 (SLITVSILAFTNLLVIFVPTI). Over 435–436 (RD) the chain is Extracellular. Residues 437 to 457 (IFGFIGASAASMLIFILPSAF) traverse the membrane as a helical segment. The Cytoplasmic portion of the chain corresponds to 458–472 (YIKLVKKEPMKSVQK). Residues 473–495 (IGALFFLLSGVLVMTGSMALIVL) traverse the membrane as a helical segment. The Extracellular portion of the chain corresponds to 496 to 506 (DWVHNAPGGGH).

This sequence belongs to the amino acid/polyamine transporter 2 family. Post-translationally, polyubiquitination by NEDD4L regulates the degradation and the activity of SLC38A2.

The protein resides in the cell membrane. The enzyme catalyses L-alanine(in) + Na(+)(in) = L-alanine(out) + Na(+)(out). It carries out the reaction glycine(in) + Na(+)(in) = glycine(out) + Na(+)(out). The catalysed reaction is L-serine(in) + Na(+)(in) = L-serine(out) + Na(+)(out). It catalyses the reaction L-proline(in) + Na(+)(in) = L-proline(out) + Na(+)(out). The enzyme catalyses L-methionine(in) + Na(+)(in) = L-methionine(out) + Na(+)(out). It carries out the reaction L-histidine(in) + Na(+)(in) = L-histidine(out) + Na(+)(out). The catalysed reaction is L-asparagine(in) + Na(+)(in) = L-asparagine(out) + Na(+)(out). It catalyses the reaction L-glutamine(in) + Na(+)(in) = L-glutamine(out) + Na(+)(out). The enzyme catalyses L-threonine(in) + Na(+)(in) = L-threonine(out) + Na(+)(out). It carries out the reaction L-leucine(in) + Na(+)(in) = L-leucine(out) + Na(+)(out). The catalysed reaction is L-phenylalanine(in) + Na(+)(in) = L-phenylalanine(out) + Na(+)(out). Inhibited by N-methyl-D-glucamine. Inhibited by choline. Allosteric regulation of sodium ions binding by pH. Symporter that cotransports neutral amino acids and sodium ions from the extracellular to the intracellular side of the cell membrane. The transport is pH-sensitive, Li(+)-intolerant, electrogenic, driven by the Na(+) electrochemical gradient and cotransports of neutral amino acids and sodium ions with a stoichiometry of 1:1. May function in the transport of amino acids at the blood-brain barrier. May function in the transport of amino acids in the supply of maternal nutrients to the fetus through the placenta. Maintains a key metabolic glutamine/glutamate balance underpinning retrograde signaling by dendritic release of the neurotransmitter glutamate. Transports L-proline in differentiating osteoblasts for the efficient synthesis of proline-enriched proteins and provides proline essential for osteoblast differentiation and bone formation during bone development. The sequence is that of Sodium-coupled neutral amino acid symporter 2 from Pan paniscus (Pygmy chimpanzee).